The chain runs to 560 residues: General negative regulator of transcription subunit 5 (560 aa).

3 coiled-coil regions span residues 3-26, 37-71, and 124-177; these read QRKL…DFDD, SNSS…SKED, and KRDQ…NEMD. The interval 212 to 330 is disordered; it reads CEIQPSSSNN…DSEQQLNFPP (119 aa). A compositionally biased stretch (polar residues) spans 215-237; that stretch reads QPSSSNNEAPKEGNNQTSLSSIR. Residues 273–288 show a composition bias toward low complexity; it reads SQSISSTPTPVSTDTP. Positions 299–311 are enriched in polar residues; the sequence is FDNSTLGTPTTHV. Thr-306 carries the post-translational modification Phosphothreonine. A Glycyl lysine isopeptide (Lys-Gly) (interchain with G-Cter in ubiquitin) cross-link involves residue Lys-338. The residue at position 377 (Ser-377) is a Phosphoserine.

Belongs to the CNOT2/3/5 family. Forms a NOT protein complex that comprises NOT1, NOT2, NOT3, NOT4 and NOT5. Subunit of the 1.0 MDa CCR4-NOT core complex that contains CCR4, CAF1, NOT1, NOT2, NOT3, NOT4, NOT5, CAF40 and CAF130. In the complex interacts with NOT1 and NOT2. The core complex probably is part of a less characterized 1.9 MDa CCR4-NOT complex.

It localises to the cytoplasm. The protein resides in the nucleus. Its function is as follows. Acts as a component of the CCR4-NOT core complex, which in the nucleus seems to be a general transcription factor, and in the cytoplasm the major mRNA deadenylase involved in mRNA turnover. The NOT protein subcomplex negatively regulates the basal and activated transcription of many genes. Preferentially affects TC-type TATA element-dependent transcription. Could directly or indirectly inhibit component(s) of the general transcription machinery. This Saccharomyces cerevisiae (strain ATCC 204508 / S288c) (Baker's yeast) protein is General negative regulator of transcription subunit 5 (NOT5).